A 316-amino-acid polypeptide reads, in one-letter code: Taste receptor type 2 member 109 (316 aa).

Residues 1–14 (MEHLLKRTFDITEN) are Extracellular-facing. The helical transmembrane segment at 15–35 (ILLIILFIELIIGLIGNGFTA) threads the bilayer. Over 36–62 (LVHCMDWVKRKKMSLVNKILTALATSR) the chain is Cytoplasmic. The chain crosses the membrane as a helical span at residues 63 to 83 (IFLLWFMLVGFPISSLYPYLV). At 84–94 (TTRLMIQFTST) the chain is on the extracellular side. A helical transmembrane segment spans residues 95-115 (LWTIANHISVWFATCLSVFYF). The Cytoplasmic segment spans residues 116-135 (LKIANFSNSPFLYLKRRVEK). A helical membrane pass occupies residues 136-156 (VVSVTLLVSLVLLFLNILLLN). The Extracellular segment spans residues 157–191 (LEINMCINEYHQINISYIFISYYHLSCQIQVLGSH). The N-linked (GlcNAc...) asparagine glycan is linked to Asn170. A helical transmembrane segment spans residues 192-212 (IIFLSVPVVLSLSTFLLLIFS). At 213 to 241 (LWTLHKRMQQHVQGGRDARTTAHFKALQA) the chain is on the cytoplasmic side. The helical transmembrane segment at 242 to 262 (VIAFLLLYSIFILSLLLQFWI) threads the bilayer. Residues 263-270 (HGLRKKPP) are Extracellular-facing. The helical transmembrane segment at 271 to 291 (FIAFCQVVDTAFPSFHSYVLI) threads the bilayer. Topologically, residues 292-316 (LRDRKLRHASLSVLSWLKCRPNYVK) are cytoplasmic.

It belongs to the G-protein coupled receptor T2R family.

Its subcellular location is the membrane. In terms of biological role, putative taste receptor which may play a role in the perception of bitterness. The chain is Taste receptor type 2 member 109 from Mus musculus (Mouse).